Here is a 286-residue protein sequence, read N- to C-terminus: Homoserine kinase (286 aa).

78–88 (PVAHGLGSSSS) contacts ATP.

This sequence belongs to the GHMP kinase family. Homoserine kinase subfamily.

It localises to the cytoplasm. It carries out the reaction L-homoserine + ATP = O-phospho-L-homoserine + ADP + H(+). The protein operates within amino-acid biosynthesis; L-threonine biosynthesis; L-threonine from L-aspartate: step 4/5. Catalyzes the ATP-dependent phosphorylation of L-homoserine to L-homoserine phosphate. This is Homoserine kinase from Limosilactobacillus fermentum (strain NBRC 3956 / LMG 18251) (Lactobacillus fermentum).